Reading from the N-terminus, the 454-residue chain is GTPase Der (454 aa).

EngA-type G domains are found at residues Ala-4–Lys-167 and Leu-188–Gln-363. GTP is bound by residues Gly-10–Ser-17, Asp-56–Leu-60, Asn-121–Glu-124, Gly-194–Ser-201, Asp-241–Val-245, and Asn-306–Asp-309. The 87-residue stretch at Lys-364 to Lys-450 folds into the KH-like domain.

It belongs to the TRAFAC class TrmE-Era-EngA-EngB-Septin-like GTPase superfamily. EngA (Der) GTPase family. Associates with the 50S ribosomal subunit.

Functionally, GTPase that plays an essential role in the late steps of ribosome biogenesis. This chain is GTPase Der, found in Orientia tsutsugamushi (strain Ikeda) (Rickettsia tsutsugamushi).